We begin with the raw amino-acid sequence, 541 residues long: Membrane protein insertase YidC (541 aa).

5 helical membrane passes run 6 to 26, 356 to 376, 430 to 450, 463 to 483, and 498 to 518; these read FFLIIAIFLSIFLLWDKWEIT, IIHSWGYSIIILTLLIKLAFY, LPILVQIPVFISLYWVLLEMV, LSAPDPYYILPLIMGISMFIQ, and IMMALPFVFTIFFLWFPSGLV.

This sequence belongs to the OXA1/ALB3/YidC family. Type 1 subfamily. In terms of assembly, interacts with the Sec translocase complex via SecD. Specifically interacts with transmembrane segments of nascent integral membrane proteins during membrane integration.

It localises to the cell inner membrane. Its function is as follows. Required for the insertion and/or proper folding and/or complex formation of integral membrane proteins into the membrane. Involved in integration of membrane proteins that insert both dependently and independently of the Sec translocase complex, as well as at least some lipoproteins. Aids folding of multispanning membrane proteins. This is Membrane protein insertase YidC from Vesicomyosocius okutanii subsp. Calyptogena okutanii (strain HA).